The sequence spans 677 residues: Transketolase (677 aa).

Histidine 27 provides a ligand contact to substrate. Thiamine diphosphate contacts are provided by residues histidine 66 and 114-116; that span reads GPL. Residue aspartate 155 coordinates Mg(2+). Residues glycine 156 and asparagine 185 each coordinate thiamine diphosphate. Residues asparagine 185 and isoleucine 187 each contribute to the Mg(2+) site. 3 residues coordinate substrate: histidine 261, arginine 356, and serine 383. Residue histidine 261 coordinates thiamine diphosphate. Positions 415 and 442 each coordinate thiamine diphosphate. The Proton donor role is filled by glutamate 415. Histidine 466, aspartate 474, and arginine 525 together coordinate substrate.

The protein belongs to the transketolase family. Homodimer. Mg(2+) is required as a cofactor. Requires Ca(2+) as cofactor. The cofactor is Mn(2+). It depends on Co(2+) as a cofactor. Thiamine diphosphate serves as cofactor.

It carries out the reaction D-sedoheptulose 7-phosphate + D-glyceraldehyde 3-phosphate = aldehydo-D-ribose 5-phosphate + D-xylulose 5-phosphate. Catalyzes the transfer of a two-carbon ketol group from a ketose donor to an aldose acceptor, via a covalent intermediate with the cofactor thiamine pyrophosphate. The sequence is that of Transketolase (TKT) from Scheffersomyces stipitis (strain ATCC 58785 / CBS 6054 / NBRC 10063 / NRRL Y-11545) (Yeast).